The primary structure comprises 564 residues: Sulfite reductase [NADPH] hemoprotein beta-component 2 (564 aa).

Positions 426, 432, 471, and 475 each coordinate [4Fe-4S] cluster. A siroheme-binding site is contributed by cysteine 475.

This sequence belongs to the nitrite and sulfite reductase 4Fe-4S domain family. As to quaternary structure, alpha(8)-beta(8). The alpha component is a flavoprotein, the beta component is a hemoprotein. The cofactor is siroheme. [4Fe-4S] cluster is required as a cofactor.

It catalyses the reaction hydrogen sulfide + 3 NADP(+) + 3 H2O = sulfite + 3 NADPH + 4 H(+). It participates in sulfur metabolism; hydrogen sulfide biosynthesis; hydrogen sulfide from sulfite (NADPH route): step 1/1. Its function is as follows. Component of the sulfite reductase complex that catalyzes the 6-electron reduction of sulfite to sulfide. This is one of several activities required for the biosynthesis of L-cysteine from sulfate. This is Sulfite reductase [NADPH] hemoprotein beta-component 2 from Klebsiella pneumoniae (strain 342).